The primary structure comprises 287 residues: Heterodimeric geranylgeranyl pyrophosphate synthase small subunit 2, chloroplastic (287 aa).

Positions 103 and 109 each coordinate Mg(2+). Positions 204, 241, and 250 each coordinate dimethylallyl diphosphate.

It belongs to the FPP/GGPP synthase family. In terms of assembly, part of a heterodimeric geranyl(geranyl)diphosphate synthase. Mg(2+) serves as cofactor. In terms of tissue distribution, mainly expressed in trichomes, and, to a lower extent, in roots, leaves, flowers and stems.

It localises to the plastid. Its subcellular location is the chloroplast thylakoid membrane. Heterodimeric geranyl(geranyl)-diphosphate (GPP) synthase small subunit. The small subunit alone is inactive in vitro while the large subunit GGPPS1 catalyzes mainly the production of geranygeranyl-diphosphate in vitro. Upon association of the two subunits, the product profile changes and the production of gerany-diphosphate is strongly increased. This chain is Heterodimeric geranylgeranyl pyrophosphate synthase small subunit 2, chloroplastic, found in Cannabis sativa (Hemp).